The sequence spans 103 residues: Large ribosomal subunit protein uL24 (103 aa).

Belongs to the universal ribosomal protein uL24 family. As to quaternary structure, part of the 50S ribosomal subunit.

In terms of biological role, one of two assembly initiator proteins, it binds directly to the 5'-end of the 23S rRNA, where it nucleates assembly of the 50S subunit. One of the proteins that surrounds the polypeptide exit tunnel on the outside of the subunit. The chain is Large ribosomal subunit protein uL24 from Corynebacterium urealyticum (strain ATCC 43042 / DSM 7109).